Reading from the N-terminus, the 618-residue chain is Very-long-chain aldehyde decarbonylase GL1-3 (618 aa).

Helical transmembrane passes span 9–29 (LSSW…GPVV), 46–66 (TSWC…MLFF), 91–111 (MVIM…FPAT), 121–141 (GWAI…YWAH), 174–194 (LESL…FMAG), 289–309 (DFVF…PFAF), and 315–335 (LPFA…GFML). Residues 127–267 (VLHVAVSEPA…MPLFDALGGT (141 aa)) enclose the Fatty acid hydroxylase domain.

The protein belongs to the sterol desaturase family. As to quaternary structure, homodimer. In terms of tissue distribution, expressed in germinating seeds and stamens.

It is found in the endoplasmic reticulum membrane. The catalysed reaction is a long-chain fatty aldehyde + 2 NADPH + O2 + H(+) = a long-chain alkane + formate + 2 NADP(+) + H2O. Its function is as follows. Aldehyde decarbonylase involved in the conversion of aldehydes to alkanes. Core component of a very-long-chain alkane synthesis complex. The sequence is that of Very-long-chain aldehyde decarbonylase GL1-3 from Oryza sativa subsp. japonica (Rice).